A 376-amino-acid chain; its full sequence is Glutamate 5-kinase (376 aa).

Lys15 is a binding site for ATP. The substrate site is built by Ser56, Asp143, and Asn155. Ser175–Asp176 provides a ligand contact to ATP. The PUA domain maps to Lys281 to Thr358.

This sequence belongs to the glutamate 5-kinase family.

It is found in the cytoplasm. The enzyme catalyses L-glutamate + ATP = L-glutamyl 5-phosphate + ADP. Its pathway is amino-acid biosynthesis; L-proline biosynthesis; L-glutamate 5-semialdehyde from L-glutamate: step 1/2. Functionally, catalyzes the transfer of a phosphate group to glutamate to form L-glutamate 5-phosphate. The sequence is that of Glutamate 5-kinase from Rhodopseudomonas palustris (strain TIE-1).